We begin with the raw amino-acid sequence, 148 residues long: SsrA-binding protein (148 aa).

The disordered stretch occupies residues 119–148; sequence AKGKKQHDKRQSMKEADWKREKQRLIKHTR. Positions 127–142 are enriched in basic and acidic residues; it reads KRQSMKEADWKREKQR.

It belongs to the SmpB family.

It is found in the cytoplasm. Its function is as follows. Required for rescue of stalled ribosomes mediated by trans-translation. Binds to transfer-messenger RNA (tmRNA), required for stable association of tmRNA with ribosomes. tmRNA and SmpB together mimic tRNA shape, replacing the anticodon stem-loop with SmpB. tmRNA is encoded by the ssrA gene; the 2 termini fold to resemble tRNA(Ala) and it encodes a 'tag peptide', a short internal open reading frame. During trans-translation Ala-aminoacylated tmRNA acts like a tRNA, entering the A-site of stalled ribosomes, displacing the stalled mRNA. The ribosome then switches to translate the ORF on the tmRNA; the nascent peptide is terminated with the 'tag peptide' encoded by the tmRNA and targeted for degradation. The ribosome is freed to recommence translation, which seems to be the essential function of trans-translation. This Neisseria meningitidis serogroup C (strain 053442) protein is SsrA-binding protein.